Reading from the N-terminus, the 204-residue chain is Imidazoleglycerol-phosphate dehydratase (204 aa).

The protein belongs to the imidazoleglycerol-phosphate dehydratase family.

The protein resides in the cytoplasm. The enzyme catalyses D-erythro-1-(imidazol-4-yl)glycerol 3-phosphate = 3-(imidazol-4-yl)-2-oxopropyl phosphate + H2O. Its pathway is amino-acid biosynthesis; L-histidine biosynthesis; L-histidine from 5-phospho-alpha-D-ribose 1-diphosphate: step 6/9. The sequence is that of Imidazoleglycerol-phosphate dehydratase from Corynebacterium jeikeium (strain K411).